The primary structure comprises 580 residues: F-box only protein 24 (580 aa).

Positions 36 to 82 (PISIQLFPPELVEHIISFLPVRDLVALGQTCRYFHEVCDGEGVWRRI) constitute an F-box domain. The RCC1 repeat unit spans residues 376–425 (GRIFMQGNNRYGQLGTGDKMDRGEPTQVCYLQRPITLWCGLNHSLVLSQS).

In terms of assembly, directly interacts with SKP1 and CUL1.

Its function is as follows. Substrate-recognition component of the SCF (SKP1-CUL1-F-box protein)-type E3 ubiquitin ligase complex. This chain is F-box only protein 24 (FBXO24), found in Homo sapiens (Human).